Here is a 146-residue protein sequence, read N- to C-terminus: UPF0178 protein BCE33L2782 (146 aa).

The protein belongs to the UPF0178 family.

The protein is UPF0178 protein BCE33L2782 of Bacillus cereus (strain ZK / E33L).